A 248-amino-acid polypeptide reads, in one-letter code: 4-hydroxy-tetrahydrodipicolinate reductase (248 aa).

NAD(+) contacts are provided by residues 8 to 13 (GAKGRM), 75 to 77 (GTT), and 99 to 102 (ATNM). His-131 (proton donor/acceptor) is an active-site residue. His-132 provides a ligand contact to (S)-2,3,4,5-tetrahydrodipicolinate. Lys-135 (proton donor) is an active-site residue. 141–142 (GT) is a binding site for (S)-2,3,4,5-tetrahydrodipicolinate.

The protein belongs to the DapB family.

The protein localises to the cytoplasm. It carries out the reaction (S)-2,3,4,5-tetrahydrodipicolinate + NAD(+) + H2O = (2S,4S)-4-hydroxy-2,3,4,5-tetrahydrodipicolinate + NADH + H(+). The catalysed reaction is (S)-2,3,4,5-tetrahydrodipicolinate + NADP(+) + H2O = (2S,4S)-4-hydroxy-2,3,4,5-tetrahydrodipicolinate + NADPH + H(+). It functions in the pathway amino-acid biosynthesis; L-lysine biosynthesis via DAP pathway; (S)-tetrahydrodipicolinate from L-aspartate: step 4/4. In terms of biological role, catalyzes the conversion of 4-hydroxy-tetrahydrodipicolinate (HTPA) to tetrahydrodipicolinate. In Campylobacter jejuni subsp. doylei (strain ATCC BAA-1458 / RM4099 / 269.97), this protein is 4-hydroxy-tetrahydrodipicolinate reductase.